Consider the following 178-residue polypeptide: Ribosome maturation factor RimM (178 aa).

A PRC barrel domain is found at 98–178 (DGEYYWNQLE…RILVDWDPEF (81 aa)).

It belongs to the RimM family. As to quaternary structure, binds ribosomal protein uS19.

It is found in the cytoplasm. An accessory protein needed during the final step in the assembly of 30S ribosomal subunit, possibly for assembly of the head region. Essential for efficient processing of 16S rRNA. May be needed both before and after RbfA during the maturation of 16S rRNA. It has affinity for free ribosomal 30S subunits but not for 70S ribosomes. This chain is Ribosome maturation factor RimM, found in Cellvibrio japonicus (strain Ueda107) (Pseudomonas fluorescens subsp. cellulosa).